Here is a 248-residue protein sequence, read N- to C-terminus: Homeobox-leucine zipper protein HOX15 (248 aa).

A disordered region spans residues 1-44 (MAQDDEDVGLALGLSLGSGGHRRQRESRDEAPSSAAASLLTLRL). Positions 32–44 (PSSAAASLLTLRL) are enriched in low complexity. The homeobox DNA-binding region spans 91–150 (NSRKKLRLSKEQSALLEDRFKEHSTLNPKQKVALAKQLNLRPRQVEVWFQNRRARTKLKQ). The interval 149–193 (KQTEVDCELLKRCCETLTEENRRLHRELQQLRALTHSTAAGFFMA) is leucine-zipper. The segment at 223–248 (PTAAADRTNKPTAPHLFSPFAKSAAC) is disordered.

Belongs to the HD-ZIP homeobox family. Class II subfamily. As to expression, expressed in seedlings, stems, leaf blades and panicles.

It is found in the nucleus. Its function is as follows. Probable transcription factor. The sequence is that of Homeobox-leucine zipper protein HOX15 (HOX15) from Oryza sativa subsp. indica (Rice).